The following is a 90-amino-acid chain: Alpha-latrotoxin associated low molecular weight protein (90 aa).

A signal peptide spans 1 to 18; sequence MNKLFFVVFLCLIISVLA.

This sequence belongs to the arthropod CHH/MIH/GIH/VIH hormone family. In terms of tissue distribution, expressed by the venom gland.

The protein resides in the secreted. May increase the toxicity of alpha-latrotoxin and/or other venom components. Is non-toxic to mice and to the cockroach Periplaneta americana. The sequence is that of Alpha-latrotoxin associated low molecular weight protein from Latrodectus geometricus (Brown widow spider).